Consider the following 147-residue polypeptide: MVHLTAEEKAAITSLWGKMNVEEAGGEALGRLLVVYPWTQRFFDNFGNLSSPSAILGNPKVKAHGKKVLTSFGDAIKNMDNLKTTFAKLSELHCDKLHVDPENFRLLGNVMVIILATHFGKEFTPEVQAAWQKLVSAVAIALGHKYH.

The region spanning 3–147 is the Globin domain; that stretch reads HLTAEEKAAI…VAIALGHKYH (145 aa). Residues Ser14 and Ser51 each carry the phosphoserine modification. Heme b contacts are provided by His64 and His93.

Belongs to the globin family. Heterotetramer of two alpha chains and two epsilon chains in early embryonic hemoglobin Gower-2; two zeta chains and two epsilon chains in early embryonic hemoglobin Gower-1. As to expression, red blood cells.

The epsilon chain is a beta-type chain of early mammalian embryonic hemoglobin. This is Hemoglobin subunit epsilon (HBE1) from Ateles belzebuth (White-bellied spider monkey).